A 315-amino-acid chain; its full sequence is L-lactate dehydrogenase (315 aa).

NAD(+) is bound by residues V17, D38, K43, Y69, and 83–84 (GA). Substrate is bound by residues Q86, R92, and 124 to 127 (NPVD). NAD(+)-binding positions include 122-124 (ATN) and S147. 152 to 155 (DTAR) contributes to the substrate binding site. R157 and H172 together coordinate beta-D-fructose 1,6-bisphosphate. H179 serves as the catalytic Proton acceptor. At Y224 the chain carries Phosphotyrosine. Residue T233 participates in substrate binding.

It belongs to the LDH/MDH superfamily. LDH family. As to quaternary structure, homotetramer.

It is found in the cytoplasm. It catalyses the reaction (S)-lactate + NAD(+) = pyruvate + NADH + H(+). The protein operates within fermentation; pyruvate fermentation to lactate; (S)-lactate from pyruvate: step 1/1. With respect to regulation, allosterically activated by fructose 1,6-bisphosphate (FBP). Catalyzes the conversion of lactate to pyruvate. The polypeptide is L-lactate dehydrogenase (Bacillus pumilus (strain SAFR-032)).